The following is a 671-amino-acid chain: Anti-sigma-I factor RsgI2 (671 aa).

The Cytoplasmic segment spans residues 1–57; the sequence is MSHYTGIILKLESDRAIVLTDGLDFMELKLKPGMQRGQHVIFDESDLYSAGLITRYK. The region spanning 4–51 is the RsgI N-terminal anti-sigma domain; that stretch reads YTGIILKLESDRAIVLTDGLDFMELKLKPGMQRGQHVIFDESDLYSAG. A helical transmembrane segment spans residues 58–78; sequence SIIMPFSAFAAAAAVFLVILF. Topologically, residues 79–671 are extracellular; it reads SLRFVSISQE…SGTLYWGIEP (593 aa). Disordered stretches follow at residues 290–323 and 359–505; these read TEAQ…IPHT and PVPV…APTE. Residues 359–379 show a composition bias toward low complexity; that stretch reads PVPVSTPKPVSTPAYSSTPTP. The span at 380–400 shows a compositional bias: pro residues; it reads ESTPVPVSTPKPASTPTPAST. The segment covering 401–425 has biased composition (low complexity); the sequence is PKPVSTPTHVSTPKPISTPTSTPRP. Residues 426–446 show a composition bias toward pro residues; sequence ASTPKPTSTPTPESTPKPTST. Positions 447-491 are enriched in low complexity; sequence PAPVSTPTSTPIPTYTSTPASTPIPAYTSTPTSIPTLTPATSPAP. The segment covering 492–502 has biased composition (pro residues); it reads TSSPTPIPSPA. Positions 508–671 constitute a CBM3 domain; that stretch reads LLTKIELQAY…SGTLYWGIEP (164 aa). The Ca(2+) site is built by Thr554, Asp556, Asp637, Ser640, and Asp641.

In terms of assembly, interacts (via RsgI N-terminal anti-sigma domain) with SigI2.

Its subcellular location is the cell membrane. Its function is as follows. Anti-sigma factor for SigI2. Negatively regulates SigI2 activity through direct interaction. Binding of the polysaccharide substrate to the extracellular C-terminal sensing domain of RsgI2 may induce a conformational change in its N-terminal cytoplasmic region, leading to the release and activation of SigI2. In Acetivibrio thermocellus (strain ATCC 27405 / DSM 1237 / JCM 9322 / NBRC 103400 / NCIMB 10682 / NRRL B-4536 / VPI 7372) (Clostridium thermocellum), this protein is Anti-sigma-I factor RsgI2.